We begin with the raw amino-acid sequence, 478 residues long: Proline--tRNA ligase (478 aa).

It belongs to the class-II aminoacyl-tRNA synthetase family. ProS type 3 subfamily. Homodimer.

It localises to the cytoplasm. It catalyses the reaction tRNA(Pro) + L-proline + ATP = L-prolyl-tRNA(Pro) + AMP + diphosphate. Catalyzes the attachment of proline to tRNA(Pro) in a two-step reaction: proline is first activated by ATP to form Pro-AMP and then transferred to the acceptor end of tRNA(Pro). This Clostridium botulinum (strain 657 / Type Ba4) protein is Proline--tRNA ligase.